The primary structure comprises 269 residues: Enoyl-[acyl-carrier-protein] reductase [NADH] (269 aa).

Residues 20–21 (SI), 64–65 (DV), and 95–96 (IG) contribute to the NAD(+) site. Residue Y158 coordinates substrate. Positions 165 and 194 each coordinate NAD(+). T266 is modified (phosphothreonine).

The protein belongs to the short-chain dehydrogenases/reductases (SDR) family. FabI subfamily. As to quaternary structure, homodimer. Homotetramer. In terms of processing, is phosphorylated in vivo. Phosphorylation on Thr-266 decreases enzymatic activity.

Its subcellular location is the secreted. It is found in the cell wall. The catalysed reaction is a 2,3-saturated acyl-[ACP] + NAD(+) = a (2E)-enoyl-[ACP] + NADH + H(+). It carries out the reaction a 2,3-saturated acyl-CoA + NAD(+) = a (2E)-enoyl-CoA + NADH + H(+). The enzyme catalyses (2E)-octenoyl-CoA + NADH + H(+) = octanoyl-CoA + NAD(+). It catalyses the reaction (2E)-dodecenoyl-CoA + NADH + H(+) = dodecanoyl-CoA + NAD(+). Its pathway is lipid metabolism; mycolic acid biosynthesis. With respect to regulation, inhA activity is controlled via phosphorylation: phosphorylation on Thr-266 decreases InhA activity and likely negatively regulates biosynthesis of mycolic acids and growth of the bacterium. InhA activity is likely inhibited by activated isoniazid, hexadecynoyl-CoA and octadecynoyl-CoA, which also block the biosynthesis of mycolic acids. The antitubercular pro-drug isoniazid (INH) is oxidatively activated by the catalase-peroxidase KatG and then covalently binds NAD to form an adduct that inhibits the activity of InhA. The inhibitory adduct is the isonicotinic-acyl-NADH where the isonicotinic-acyl group replaces the 4S (and not the 4R) hydrogen of NADH. Similarly, the antitubercular pro-drugs ethionamide (ETH) and prothionamide (PTH) are activated by the flavoprotein monooxygenase EthA, and forms an adduct with NAD (ETH-NAD and PTH-NAD, respectively) that is a tight-binding inhibitor of InhA. Enoyl-ACP reductase of the type II fatty acid syntase (FAS-II) system, which is involved in the biosynthesis of mycolic acids, a major component of mycobacterial cell walls. Catalyzes the NADH-dependent reduction of the double bond of 2-trans-enoyl-[acyl-carrier protein], an essential step in the fatty acid elongation cycle of the FAS-II pathway. Shows preference for long-chain fatty acyl thioester substrates (&gt;C16), and can also use 2-trans-enoyl-CoAs as alternative substrates. The mycobacterial FAS-II system utilizes the products of the FAS-I system as primers to extend fatty acyl chain lengths up to C56, forming the meromycolate chain that serves as the precursor for final mycolic acids. In terms of biological role, is the primary target of the first-line antitubercular drug isoniazid (INH) and of the second-line drug ethionamide (ETH). Overexpressed inhA confers INH and ETH resistance to M.smegmatis. The mechanism of isoniazid action against InhA is covalent attachment of the activated form of the drug to the nicotinamide ring of NAD and binding of the INH-NAD adduct to the active site of InhA. Similarly, the ETH-NAD adduct binds InhA. This chain is Enoyl-[acyl-carrier-protein] reductase [NADH], found in Mycolicibacterium smegmatis (strain ATCC 700084 / mc(2)155) (Mycobacterium smegmatis).